Consider the following 455-residue polypeptide: Argininosuccinate lyase (455 aa).

The protein belongs to the lyase 1 family. Argininosuccinate lyase subfamily.

It is found in the cytoplasm. It catalyses the reaction 2-(N(omega)-L-arginino)succinate = fumarate + L-arginine. The protein operates within amino-acid biosynthesis; L-arginine biosynthesis; L-arginine from L-ornithine and carbamoyl phosphate: step 3/3. The sequence is that of Argininosuccinate lyase from Shewanella baltica (strain OS185).